Reading from the N-terminus, the 173-residue chain is Helix-loop-helix protein lin-22 (173 aa).

The interval K21–R34 is basic motif. Residues K21–L78 enclose the bHLH domain. A helix-loop-helix motif region spans residues A35–L78. Residues P83–T95 are compositionally biased toward low complexity. The tract at residues P83–E102 is disordered.

In terms of tissue distribution, expressed mostly in the seam (stem) cells and hypodermis (hyp7), but also to a lesser extent in the intestine.

It localises to the nucleus. Functionally, probable transcription factor. During development, required for cell fate specification, probably by promoting or repressing expression of genes involved in specific cell fate. Involved in specifying lineages derived from the epidermal stem cells of the lateral ectoderm, known as seam cells. Modulates symmetric divisions of seam cells, perhaps in concert with the Wnt signaling pathway. May repress expression of homeobox genes mab-5, egl-5 and lin-39. The protein is Helix-loop-helix protein lin-22 of Caenorhabditis elegans.